Here is a 321-residue protein sequence, read N- to C-terminus: Homoserine O-succinyltransferase (321 aa).

C142 acts as the Acyl-thioester intermediate in catalysis. K163 and S192 together coordinate substrate. Catalysis depends on H235, which acts as the Proton acceptor. The active site involves E237. R249 is a binding site for substrate.

The protein belongs to the MetA family.

Its subcellular location is the cytoplasm. It carries out the reaction L-homoserine + succinyl-CoA = O-succinyl-L-homoserine + CoA. It functions in the pathway amino-acid biosynthesis; L-methionine biosynthesis via de novo pathway; O-succinyl-L-homoserine from L-homoserine: step 1/1. Functionally, transfers a succinyl group from succinyl-CoA to L-homoserine, forming succinyl-L-homoserine. This is Homoserine O-succinyltransferase from Shewanella loihica (strain ATCC BAA-1088 / PV-4).